The primary structure comprises 488 residues: Lysine--tRNA ligase (488 aa).

Mg(2+)-binding residues include glutamate 398 and glutamate 405.

It belongs to the class-II aminoacyl-tRNA synthetase family. Homodimer. Mg(2+) is required as a cofactor.

It localises to the cytoplasm. It carries out the reaction tRNA(Lys) + L-lysine + ATP = L-lysyl-tRNA(Lys) + AMP + diphosphate. The protein is Lysine--tRNA ligase of Carboxydothermus hydrogenoformans (strain ATCC BAA-161 / DSM 6008 / Z-2901).